Reading from the N-terminus, the 767-residue chain is DNA topoisomerase 1 (767 aa).

Residues 1–23 are compositionally biased toward basic and acidic residues; it reads MSGDHLHNDSQIEADFRLNDSHK. Positions 1–201 are disordered; sequence MSGDHLHNDS…NKKKKPKKEE (201 aa). Position 2 is an N-acetylserine (Ser-2). Phosphoserine is present on residues Ser-2 and Ser-10. Basic residues predominate over residues 24 to 39; sequence HKDKHKDREHRHKEHK. Basic and acidic residues predominate over residues 40–110; that stretch reads KDKEKDREKS…DAKIKKEKEN (71 aa). Residue Ser-59 is modified to Phosphoserine. Residue Lys-103 forms a Glycyl lysine isopeptide (Lys-Gly) (interchain with G-Cter in SUMO2) linkage. A Glycyl lysine isopeptide (Lys-Gly) (interchain with G-Cter in SUMO); alternate cross-link involves residue Lys-105. Lys-105 participates in a covalent cross-link: Glycyl lysine isopeptide (Lys-Gly) (interchain with G-Cter in SUMO2); alternate. Phosphoserine is present on Ser-114. Residue Lys-119 forms a Glycyl lysine isopeptide (Lys-Gly) (interchain with G-Cter in SUMO); alternate linkage. A Glycyl lysine isopeptide (Lys-Gly) (interchain with G-Cter in SUMO2); alternate cross-link involves residue Lys-119. Residue Lys-119 forms a Glycyl lysine isopeptide (Lys-Gly) (interchain with G-Cter in SUMO1); alternate linkage. A compositionally biased stretch (basic and acidic residues) spans 131 to 168; sequence PKEDIKPLKRPRDEDDADYKPKKIKTEDIKKEKKRKLE. Residues Lys-136 and Lys-150 each participate in a glycyl lysine isopeptide (Lys-Gly) (interchain with G-Cter in SUMO2) cross-link. Residue Lys-155 forms a Glycyl lysine isopeptide (Lys-Gly) (interchain with G-Cter in SUMO); alternate linkage. Residue Lys-155 forms a Glycyl lysine isopeptide (Lys-Gly) (interchain with G-Cter in SUMO2); alternate linkage. Glycyl lysine isopeptide (Lys-Gly) (interchain with G-Cter in SUMO2) cross-links involve residues Lys-160 and Lys-166. Lys-174 participates in a covalent cross-link: Glycyl lysine isopeptide (Lys-Gly) (interchain with G-Cter in SUMO2); alternate. Residue Lys-174 is modified to N6-acetyllysine; alternate. Residues 181 to 201 show a composition bias toward basic and acidic residues; that stretch reads KDKDKKVPEPDNKKKKPKKEE. Residue Lys-206 forms a Glycyl lysine isopeptide (Lys-Gly) (interchain with G-Cter in SUMO2) linkage. Lys-282 is subject to N6-acetyllysine. A Glycyl lysine isopeptide (Lys-Gly) (interchain with G-Cter in SUMO2) cross-link involves residue Lys-338. Interaction with DNA stretches follow at residues 427–428 and 490–495; these read KY and RAGNEK. In terms of domain architecture, Topo IB-type catalytic spans 434–767; it reads SSRIKGEKDW…IDMADEDYEF (334 aa). Position 508 is a phosphoserine; by CK2 (Ser-508). Lys-551 is covalently cross-linked (Glycyl lysine isopeptide (Lys-Gly) (interchain with G-Cter in SUMO2)). Residues 587-589 are interaction with DNA; sequence TAK. Glycyl lysine isopeptide (Lys-Gly) (interchain with G-Cter in SUMO2) cross-links involve residues Lys-644, Lys-702, and Lys-714. Tyr-725 acts as the O-(3'-phospho-DNA)-tyrosine intermediate in catalysis.

Belongs to the type IB topoisomerase family. As to quaternary structure, monomer. Interacts with ERCC6. Interacts with TPRN; TPRN interacts with a number of DNA damage response proteins, is recruited to sites of DNA damage and may play a role in DNA damage repair. In terms of processing, sumoylated. Lys-119 is the main site of sumoylation. Sumoylation plays a role in partitioning TOP1 between nucleoli and nucleoplasm. Levels are dramatically increased on camptothecin (CPT) treatment. Phosphorylation at Ser-508 by CK2 increases binding to supercoiled DNA and sensitivity to camptothecin.

The protein resides in the nucleus. The protein localises to the nucleolus. Its subcellular location is the nucleoplasm. It carries out the reaction ATP-independent breakage of single-stranded DNA, followed by passage and rejoining.. Specifically inhibited by camptothecin (CPT), a plant alkaloid with antitumor activity. Functionally, releases the supercoiling and torsional tension of DNA introduced during the DNA replication and transcription by transiently cleaving and rejoining one strand of the DNA duplex. Introduces a single-strand break via transesterification at a target site in duplex DNA. The scissile phosphodiester is attacked by the catalytic tyrosine of the enzyme, resulting in the formation of a DNA-(3'-phosphotyrosyl)-enzyme intermediate and the expulsion of a 5'-OH DNA strand. The free DNA strand then rotates around the intact phosphodiester bond on the opposing strand, thus removing DNA supercoils. Finally, in the religation step, the DNA 5'-OH attacks the covalent intermediate to expel the active-site tyrosine and restore the DNA phosphodiester backbone. Regulates the alternative splicing of tissue factor (F3) pre-mRNA in endothelial cells. Involved in the circadian transcription of the core circadian clock component BMAL1 by altering the chromatin structure around the ROR response elements (ROREs) on the BMAL1 promoter. This Chlorocebus aethiops (Green monkey) protein is DNA topoisomerase 1 (TOP1).